We begin with the raw amino-acid sequence, 651 residues long: Endo-1,4-beta-xylanase A (651 aa).

Residues 1 to 30 (MKRKVKKMAAMATSIIMAIMIILHSIPVLA) form the signal peptide. Positions 33-227 (IIYDNETGTH…SSGYANVYKN (195 aa)) constitute a GH11 domain. The active-site Nucleophile is Glu-124. The Proton donor role is filled by Glu-214. 3 CBM6 domains span residues 250-370 (SIIE…FIFS), 387-507 (SIIQ…FVFT), and 527-647 (SNIQ…FVFS). Positions 253 and 255 each coordinate Ca(2+). Residue Thr-270 participates in D-xylotriose binding. Arg-275 is a binding site for Ca(2+). Repeat unit 1 spans residues 278-339 (GYIENGNTVT…SSTGSWNTYQ (62 aa)). Residues 278–616 (GYIENGNTVT…GSTGSFDTYR (339 aa)) are 3 X 61 AA approximate repeats. Tyr-279, Asn-336, and Asn-363 together coordinate D-xylotriose. Tyr-279, Asn-336, and Asn-363 together coordinate D-xylobiose. Residue Asp-365 participates in Ca(2+) binding. Repeat 2 spans residues 415-476 (GYIENGYSTT…PSTNSWDSYQ (62 aa)). Positions 530, 532, and 552 each coordinate Ca(2+). Repeat unit 3 spans residues 555–616 (GYIENGYSTT…GSTGSFDTYR (62 aa)). The D-xylotriose site is built by Tyr-556, Asp-613, and Asn-640. Asp-642 contributes to the Ca(2+) binding site.

This sequence belongs to the glycosyl hydrolase 11 (cellulase G) family.

It is found in the secreted. It catalyses the reaction Endohydrolysis of (1-&gt;4)-beta-D-xylosidic linkages in xylans.. It functions in the pathway glycan degradation; xylan degradation. Its function is as follows. Endoxylanase that degrades arabinoxylan and glucuronoxylan to xylobiose and xylotriose (in vitro). The sequence is that of Endo-1,4-beta-xylanase A (xynA) from Thermoclostridium stercorarium (Clostridium stercorarium).